Reading from the N-terminus, the 260-residue chain is Hemin import ATP-binding protein HmuV (260 aa).

The 238-residue stretch at 2-239 (IRAENITLIR…ETIARVYGIG (238 aa)) folds into the ABC transporter domain. 34–41 (GPNGAGKS) contributes to the ATP binding site.

It belongs to the ABC transporter superfamily. Heme (hemin) importer (TC 3.A.1.14.5) family. As to quaternary structure, the complex is composed of two ATP-binding proteins (HmuV), two transmembrane proteins (HmuU) and a solute-binding protein (HmuT).

It localises to the cell inner membrane. In terms of biological role, part of the ABC transporter complex HmuTUV involved in hemin import. Responsible for energy coupling to the transport system. In Agrobacterium fabrum (strain C58 / ATCC 33970) (Agrobacterium tumefaciens (strain C58)), this protein is Hemin import ATP-binding protein HmuV.